Consider the following 169-residue polypeptide: ATP synthase subunit b (169 aa).

A helical membrane pass occupies residues 26–46 (FFFVLLIFLIVLGVIAKWVVP).

Belongs to the ATPase B chain family. As to quaternary structure, F-type ATPases have 2 components, F(1) - the catalytic core - and F(0) - the membrane proton channel. F(1) has five subunits: alpha(3), beta(3), gamma(1), delta(1), epsilon(1). F(0) has three main subunits: a(1), b(2) and c(10-14). The alpha and beta chains form an alternating ring which encloses part of the gamma chain. F(1) is attached to F(0) by a central stalk formed by the gamma and epsilon chains, while a peripheral stalk is formed by the delta and b chains.

Its subcellular location is the cell membrane. F(1)F(0) ATP synthase produces ATP from ADP in the presence of a proton or sodium gradient. F-type ATPases consist of two structural domains, F(1) containing the extramembraneous catalytic core and F(0) containing the membrane proton channel, linked together by a central stalk and a peripheral stalk. During catalysis, ATP synthesis in the catalytic domain of F(1) is coupled via a rotary mechanism of the central stalk subunits to proton translocation. Its function is as follows. Component of the F(0) channel, it forms part of the peripheral stalk, linking F(1) to F(0). This Mycobacterium sp. (strain JLS) protein is ATP synthase subunit b.